Reading from the N-terminus, the 386-residue chain is Bifunctional enzyme IspD/IspF (386 aa).

Residues 1 to 229 (MIRGERVIGI…RARALLEAPV (229 aa)) are 2-C-methyl-D-erythritol 4-phosphate cytidylyltransferase. The segment at 230-386 (ATGVGYDTHR…AIALLVRAAG (157 aa)) is 2-C-methyl-D-erythritol 2,4-cyclodiphosphate synthase. Residues Asp-236 and His-238 each coordinate a divalent metal cation. 4-CDP-2-C-methyl-D-erythritol 2-phosphate-binding positions include 236-238 (DTH) and 261-262 (HS). Residue His-269 coordinates a divalent metal cation. Residues 283–285 (DLG), 288–292 (FPDTD), 359–362 (TTGE), Phe-366, and Arg-369 contribute to the 4-CDP-2-C-methyl-D-erythritol 2-phosphate site.

This sequence in the N-terminal section; belongs to the IspD/TarI cytidylyltransferase family. IspD subfamily. The protein in the C-terminal section; belongs to the IspF family. It depends on a divalent metal cation as a cofactor.

It carries out the reaction 2-C-methyl-D-erythritol 4-phosphate + CTP + H(+) = 4-CDP-2-C-methyl-D-erythritol + diphosphate. The enzyme catalyses 4-CDP-2-C-methyl-D-erythritol 2-phosphate = 2-C-methyl-D-erythritol 2,4-cyclic diphosphate + CMP. It functions in the pathway isoprenoid biosynthesis; isopentenyl diphosphate biosynthesis via DXP pathway; isopentenyl diphosphate from 1-deoxy-D-xylulose 5-phosphate: step 2/6. Its pathway is isoprenoid biosynthesis; isopentenyl diphosphate biosynthesis via DXP pathway; isopentenyl diphosphate from 1-deoxy-D-xylulose 5-phosphate: step 4/6. Its function is as follows. Bifunctional enzyme that catalyzes the formation of 4-diphosphocytidyl-2-C-methyl-D-erythritol from CTP and 2-C-methyl-D-erythritol 4-phosphate (MEP) (IspD), and catalyzes the conversion of 4-diphosphocytidyl-2-C-methyl-D-erythritol 2-phosphate (CDP-ME2P) to 2-C-methyl-D-erythritol 2,4-cyclodiphosphate (ME-CPP) with a corresponding release of cytidine 5-monophosphate (CMP) (IspF). This is Bifunctional enzyme IspD/IspF from Anaeromyxobacter dehalogenans (strain 2CP-C).